The chain runs to 330 residues: MEDRLVGCRLSEEDVDEVSLRPRKFGEYIGQTKVKENLMVFIEAAKKRNEALDHVLLYGPPGLGKTTLAGIIASELGVNLRITSGPAIEKPGDLAAILTNLGNFDVLFIDEIHRLNRSVEEILYPAMEDYALDIIIGKGPSARSIRLDLPKFTLIGATTRAGLLTSPLRDRFGVINKLELYSVEELGQIVKRSARILNVGIEDEAAEEIARRARGTPRVANRILKRIRDFAQVKSDGFITKEIARTGLEALEVDEIGLDAVDRNLLMSIIEKFGGGPVGLDTLAATIGEEPDTIEDVYEPYLLQLGFINKTPRGRMATKLAYEHFGLKYE.

The large ATPase domain (RuvB-L) stretch occupies residues 1–181 (MEDRLVGCRL…FGVINKLELY (181 aa)). ATP is bound by residues leucine 20, arginine 21, glycine 62, lysine 65, threonine 66, threonine 67, 128 to 130 (EDY), arginine 171, tyrosine 181, and arginine 218. Mg(2+) is bound at residue threonine 66. The segment at 182–252 (SVEELGQIVK…IARTGLEALE (71 aa)) is small ATPAse domain (RuvB-S). The segment at 255 to 330 (EIGLDAVDRN…AYEHFGLKYE (76 aa)) is head domain (RuvB-H). Residues lysine 310 and arginine 315 each contribute to the DNA site.

Belongs to the RuvB family. In terms of assembly, homohexamer. Forms an RuvA(8)-RuvB(12)-Holliday junction (HJ) complex. HJ DNA is sandwiched between 2 RuvA tetramers; dsDNA enters through RuvA and exits via RuvB. An RuvB hexamer assembles on each DNA strand where it exits the tetramer. Each RuvB hexamer is contacted by two RuvA subunits (via domain III) on 2 adjacent RuvB subunits; this complex drives branch migration. In the full resolvosome a probable DNA-RuvA(4)-RuvB(12)-RuvC(2) complex forms which resolves the HJ.

It is found in the cytoplasm. The catalysed reaction is ATP + H2O = ADP + phosphate + H(+). In terms of biological role, the RuvA-RuvB-RuvC complex processes Holliday junction (HJ) DNA during genetic recombination and DNA repair, while the RuvA-RuvB complex plays an important role in the rescue of blocked DNA replication forks via replication fork reversal (RFR). RuvA specifically binds to HJ cruciform DNA, conferring on it an open structure. The RuvB hexamer acts as an ATP-dependent pump, pulling dsDNA into and through the RuvAB complex. RuvB forms 2 homohexamers on either side of HJ DNA bound by 1 or 2 RuvA tetramers; 4 subunits per hexamer contact DNA at a time. Coordinated motions by a converter formed by DNA-disengaged RuvB subunits stimulates ATP hydrolysis and nucleotide exchange. Immobilization of the converter enables RuvB to convert the ATP-contained energy into a lever motion, pulling 2 nucleotides of DNA out of the RuvA tetramer per ATP hydrolyzed, thus driving DNA branch migration. The RuvB motors rotate together with the DNA substrate, which together with the progressing nucleotide cycle form the mechanistic basis for DNA recombination by continuous HJ branch migration. Branch migration allows RuvC to scan DNA until it finds its consensus sequence, where it cleaves and resolves cruciform DNA. In Acetivibrio thermocellus (strain ATCC 27405 / DSM 1237 / JCM 9322 / NBRC 103400 / NCIMB 10682 / NRRL B-4536 / VPI 7372) (Clostridium thermocellum), this protein is Holliday junction branch migration complex subunit RuvB.